A 177-amino-acid polypeptide reads, in one-letter code: Putative rubredoxin (177 aa).

Positions 1-38 (MKICRICGYQIPEGEFNLLEDGWVCPRCGVGKEELQDS) constitute a Rubredoxin-like domain. The Fe cation site is built by C4, C7, C25, and C28.

It belongs to the rubredoxin family. It depends on Fe(3+) as a cofactor.

The protein is Putative rubredoxin (rdxA) of Methanothermobacter thermautotrophicus (strain ATCC 29096 / DSM 1053 / JCM 10044 / NBRC 100330 / Delta H) (Methanobacterium thermoautotrophicum).